Here is a 274-residue protein sequence, read N- to C-terminus: MTTYAIGDLQGCQTQLNDLLQKIDAVAPQAQLVFVGDIVNRGPRSLATLRQVRALGQRARIVLGNHDLNLLAIACGLRKPHASDTVDDIMAADDRDELIDWLRHQPLALARDNHLFVHAGVLPQWSAAQTVALSREVEAVLQGPDWVAFLQKMYGNEPSLWDDSLQGDDRLRCIVNALTRIRFCQADGRMDFKAVESLAHTPAGLMPWFDAPDRRSTDTTVVFGHWSTLGLMVLPNVIGLDTGCVWGGQLTAMNLTDRTTIQVKCPQHQKPGKN.

The protein belongs to the Ap4A hydrolase family.

The enzyme catalyses P(1),P(4)-bis(5'-adenosyl) tetraphosphate + H2O = 2 ADP + 2 H(+). Functionally, hydrolyzes diadenosine 5',5'''-P1,P4-tetraphosphate to yield ADP. The protein is Bis(5'-nucleosyl)-tetraphosphatase, symmetrical of Janthinobacterium sp. (strain Marseille) (Minibacterium massiliensis).